The primary structure comprises 423 residues: Protein CLP1 homolog (423 aa).

ATP is bound by residues E16, K57, and 119 to 124 (DVGKST).

Belongs to the Clp1 family. Clp1 subfamily.

It is found in the nucleus. Its function is as follows. Required for endonucleolytic cleavage during polyadenylation-dependent pre-mRNA 3'-end formation. This is Protein CLP1 homolog (cbc) from Drosophila melanogaster (Fruit fly).